The following is a 61-amino-acid chain: Large ribosomal subunit protein uL30 (61 aa).

Belongs to the universal ribosomal protein uL30 family. Part of the 50S ribosomal subunit.

The chain is Large ribosomal subunit protein uL30 from Rhizorhabdus wittichii (strain DSM 6014 / CCUG 31198 / JCM 15750 / NBRC 105917 / EY 4224 / RW1) (Sphingomonas wittichii).